The sequence spans 137 residues: Type 3 secretion system pilotin (137 aa).

Positions 1 to 14 are cleaved as a signal peptide; that stretch reads MLLPLALLLGGCVS.

This sequence belongs to the ExsB/YscW family.

The protein resides in the cell outer membrane. Functionally, involved in the synthesis of the type III secretion system (T3SS), also called injectisome, which is used to inject bacterial effector proteins into eukaryotic host cells. Pilot protein that is required for the proper localization of the secretin PscC in the outer membrane. Necessary for full in vivo virulence. The polypeptide is Type 3 secretion system pilotin (Pseudomonas aeruginosa (strain ATCC 15692 / DSM 22644 / CIP 104116 / JCM 14847 / LMG 12228 / 1C / PRS 101 / PAO1)).